We begin with the raw amino-acid sequence, 247 residues long: UPF0280 protein MmarC5_0355 (247 aa).

It belongs to the UPF0280 family.

The protein is UPF0280 protein MmarC5_0355 of Methanococcus maripaludis (strain C5 / ATCC BAA-1333).